We begin with the raw amino-acid sequence, 298 residues long: Homoserine kinase (298 aa).

Residue 83–93 participates in ATP binding; the sequence is PISRGLGSSSS.

Belongs to the GHMP kinase family. Homoserine kinase subfamily.

It is found in the cytoplasm. It catalyses the reaction L-homoserine + ATP = O-phospho-L-homoserine + ADP + H(+). It functions in the pathway amino-acid biosynthesis; L-threonine biosynthesis; L-threonine from L-aspartate: step 4/5. In terms of biological role, catalyzes the ATP-dependent phosphorylation of L-homoserine to L-homoserine phosphate. This Clostridium botulinum (strain Eklund 17B / Type B) protein is Homoserine kinase.